The chain runs to 346 residues: F(420)H(2) dehydrogenase subunit H (346 aa).

8 helical membrane passes run 18-38 (GIVG…AVWL), 91-111 (IFML…AVFI), 125-145 (ISVL…FMVA), 170-190 (PLGI…IVDI), 196-216 (LHWN…SLMA), 257-277 (ILGS…PGFI), 284-304 (GIIV…MVII), and 326-346 (LLPL…YLGA).

It belongs to the complex I subunit 1 family. The FPO complex is composed of at least 13 different subunits. FpoA, FpoH, FpoJ, FpoK, FpoL, FpoM and FpoN proteins constitute the membrane sector of the complex.

It is found in the cell membrane. The catalysed reaction is methanophenazine + reduced coenzyme F420-(gamma-L-Glu)(n) = dihydromethanophenazine + oxidized coenzyme F420-(gamma-L-Glu)(n) + H(+). Component of the F(420)H(2) dehydrogenase (FPO complex) which is part of the energy-conserving F(420)H(2):heterodisulfide oxidoreductase system. The membrane-bound electron transfer system of the complex plays an important role in the metabolism of methylotrophic methanogens when the organisms grow on methanol or methylamines. Catalyzes the oxidation of methanophenazine to dihydromethanophenazine. It shuttles electrons from F(420)H(2), via FAD and iron-sulfur (Fe-S) centers, to methanophenazine (an electron carrier in the membrane). It couples the redox reaction to proton translocation (for every two electrons transferred, two hydrogen ions are translocated across the cytoplasmic membrane), and thus conserves the redox energy in a proton gradient. The protein is F(420)H(2) dehydrogenase subunit H of Methanosarcina barkeri (strain Fusaro / DSM 804).